We begin with the raw amino-acid sequence, 270 residues long: uncharacterized protein (270 aa).

Positions 53, 55, 83, 116, 207, and 209 each coordinate a divalent metal cation.

Belongs to the metallophosphoesterase superfamily. A divalent metal cation serves as cofactor.

This is an uncharacterized protein from Bacillus subtilis (strain 168).